A 109-amino-acid polypeptide reads, in one-letter code: Homeobox protein E60 (109 aa).

The disordered stretch occupies residues 1–31 (PRTRRVKRSDGRGNGGTPEEKRPRTAFSGEQ). The segment at residues 20-79 (EKRPRTAFSGEQLARLKREFAENRYLTERRRQQLSRDLGLNEAQIKIWFQNKRAKIKKAS) is a DNA-binding region (homeobox).

It belongs to the engrailed homeobox family.

The protein localises to the nucleus. The sequence is that of Homeobox protein E60 from Apis mellifera (Honeybee).